The sequence spans 394 residues: 1-deoxy-D-xylulose 5-phosphate reductoisomerase (394 aa).

Residues Thr10, Gly11, Ser12, Ile13, Gly38, Arg39, Asn40, and Asn123 each coordinate NADPH. Lys124 is a binding site for 1-deoxy-D-xylulose 5-phosphate. An NADPH-binding site is contributed by Glu125. Position 149 (Asp149) interacts with Mn(2+). Residues Ser150, Glu151, Ser175, and His198 each contribute to the 1-deoxy-D-xylulose 5-phosphate site. Glu151 is a Mn(2+) binding site. Residue Gly204 participates in NADPH binding. 1-deoxy-D-xylulose 5-phosphate contacts are provided by Ser211, Asn216, Lys217, and Glu220. Glu220 is a Mn(2+) binding site.

It belongs to the DXR family. Requires Mg(2+) as cofactor. It depends on Mn(2+) as a cofactor.

It carries out the reaction 2-C-methyl-D-erythritol 4-phosphate + NADP(+) = 1-deoxy-D-xylulose 5-phosphate + NADPH + H(+). The protein operates within isoprenoid biosynthesis; isopentenyl diphosphate biosynthesis via DXP pathway; isopentenyl diphosphate from 1-deoxy-D-xylulose 5-phosphate: step 1/6. Catalyzes the NADPH-dependent rearrangement and reduction of 1-deoxy-D-xylulose-5-phosphate (DXP) to 2-C-methyl-D-erythritol 4-phosphate (MEP). In Cereibacter sphaeroides (strain ATCC 17029 / ATH 2.4.9) (Rhodobacter sphaeroides), this protein is 1-deoxy-D-xylulose 5-phosphate reductoisomerase.